Consider the following 325-residue polypeptide: Glutarate 2-hydroxylase (325 aa).

The Fe cation site is built by histidine 160, aspartate 162, and histidine 292.

It belongs to the glutarate hydroxylase family. In terms of assembly, homotetramer. Fe(2+) serves as cofactor.

The enzyme catalyses glutarate + 2-oxoglutarate + O2 = (S)-2-hydroxyglutarate + succinate + CO2. It participates in amino-acid degradation. Acts as an alpha-ketoglutarate-dependent dioxygenase catalyzing hydroxylation of glutarate (GA) to L-2-hydroxyglutarate (L2HG). Functions in a L-lysine degradation pathway that proceeds via cadaverine, glutarate and L-2-hydroxyglutarate. This Escherichia coli O6:K15:H31 (strain 536 / UPEC) protein is Glutarate 2-hydroxylase.